A 217-amino-acid chain; its full sequence is Protein-L-isoaspartate O-methyltransferase (217 aa).

The active site involves Ser65.

The protein belongs to the methyltransferase superfamily. L-isoaspartyl/D-aspartyl protein methyltransferase family.

It localises to the cytoplasm. The enzyme catalyses [protein]-L-isoaspartate + S-adenosyl-L-methionine = [protein]-L-isoaspartate alpha-methyl ester + S-adenosyl-L-homocysteine. Its function is as follows. Catalyzes the methyl esterification of L-isoaspartyl residues in peptides and proteins that result from spontaneous decomposition of normal L-aspartyl and L-asparaginyl residues. It plays a role in the repair and/or degradation of damaged proteins. This chain is Protein-L-isoaspartate O-methyltransferase, found in Methanoregula boonei (strain DSM 21154 / JCM 14090 / 6A8).